Reading from the N-terminus, the 276-residue chain is Ribosomal RNA small subunit methyltransferase I (276 aa).

The protein belongs to the methyltransferase superfamily. RsmI family.

Its subcellular location is the cytoplasm. It catalyses the reaction cytidine(1402) in 16S rRNA + S-adenosyl-L-methionine = 2'-O-methylcytidine(1402) in 16S rRNA + S-adenosyl-L-homocysteine + H(+). Functionally, catalyzes the 2'-O-methylation of the ribose of cytidine 1402 (C1402) in 16S rRNA. This Mycoplasma pneumoniae (strain ATCC 29342 / M129 / Subtype 1) (Mycoplasmoides pneumoniae) protein is Ribosomal RNA small subunit methyltransferase I.